A 257-amino-acid chain; its full sequence is UPF0246 protein CLH_2088 (257 aa).

This sequence belongs to the UPF0246 family.

The sequence is that of UPF0246 protein CLH_2088 from Clostridium botulinum (strain Alaska E43 / Type E3).